A 71-amino-acid chain; its full sequence is Large ribosomal subunit protein bL31 (71 aa).

Zn(2+) contacts are provided by cysteine 16, cysteine 18, cysteine 37, and cysteine 40.

It belongs to the bacterial ribosomal protein bL31 family. Type A subfamily. In terms of assembly, part of the 50S ribosomal subunit. Requires Zn(2+) as cofactor.

Functionally, binds the 23S rRNA. This Pseudomonas entomophila (strain L48) protein is Large ribosomal subunit protein bL31.